The sequence spans 781 residues: Ubiquitin carboxyl-terminal hydrolase 14 (781 aa).

The UBP-type zinc finger occupies 169 to 279 (STCPHTENFQ…SALQIYGINI (111 aa)). Residues C171, H173, C192, C195, C204, C207, C212, H224, H228, H235, C253, and C256 each contribute to the Zn(2+) site. One can recognise a USP domain in the interval 323 to 781 (CGLINLGNSC…NGYIYFYTRC (459 aa)). C332 (nucleophile) is an active-site residue. UBA domains are found at residues 576–626 (DEDE…LFQH) and 649–689 (EVDE…VFNN). The active-site Proton acceptor is the H737.

Belongs to the peptidase C19 family.

The protein resides in the cytoplasm. It is found in the nucleus. The enzyme catalyses Thiol-dependent hydrolysis of ester, thioester, amide, peptide and isopeptide bonds formed by the C-terminal Gly of ubiquitin (a 76-residue protein attached to proteins as an intracellular targeting signal).. Required for the adaptation to the presence of glucose in the growth medium; mediates the degradation of enzymes involved in gluconeogenesis when cells are shifted to glucose-containing medium. Required for proteasome-dependent catabolite degradation of fructose-1,6-bisphosphatase (FBP1). Accelerates proteasomal breakdown of ubiquitinated proteins as it disassembles free ubiquitin chains that would compete with ubiquitinated proteins to bind to the proteasome. This is Ubiquitin carboxyl-terminal hydrolase 14 (UBP14) from Saccharomyces cerevisiae (strain ATCC 204508 / S288c) (Baker's yeast).